A 224-amino-acid chain; its full sequence is Peroxiredoxin-like 2A (224 aa).

The tract at residues 14–112 (MWSVGLGAVG…SKLGVPLYAV (99 aa)) is thioredoxin fold. Sec-85 is a non-standard amino acid (selenocysteine). The Redox-active role is filled by Cys-88.

Belongs to the peroxiredoxin-like PRXL2 family. PRXL2A subfamily.

Its subcellular location is the cytoplasm. Involved in redox regulation of the cell. Acts as an antioxidant. Inhibits TNFSF11-induced NFKB1 and JUN activation and osteoclast differentiation. May affect bone resorption and help to maintain bone mass. The protein is Peroxiredoxin-like 2A (PRXL2A) of Gallus gallus (Chicken).